The primary structure comprises 126 residues: CD59 glycoprotein (126 aa).

The first 25 residues, 1–25 (MGIQGGSVLFGLLLALAVFCHSGHS), serve as a signal peptide directing secretion. The UPAR/Ly6 domain occupies 26–106 (LQCYNCPNPT…QLENGGTSLS (81 aa)). Intrachain disulfides connect Cys-28–Cys-51, Cys-31–Cys-38, Cys-44–Cys-64, Cys-70–Cys-88, and Cys-89–Cys-94. A glycan (N-linked (GlcNAc...) asparagine) is linked at Asn-43. Asn-100 is lipidated: GPI-anchor amidated asparagine. Positions 101-126 (GGTSLSEKTVLLLVTPLLAAAWCLHP) are cleaved as a propeptide — removed in mature form.

Interacts with T-cell surface antigen CD2. Post-translationally, N- and O-glycosylated.

The protein localises to the cell membrane. It localises to the secreted. In terms of biological role, potent inhibitor of the complement membrane attack complex (MAC) action, which protects self-cells from damage during complement activation. Acts by binding to the beta-haipins of C8 (C8A and C8B) components of the assembling MAC, forming an intermolecular beta-sheet that prevents incorporation of the multiple copies of C9 required for complete formation of the osmolytic pore. This is CD59 glycoprotein from Papio sp. (Baboon).